Consider the following 546-residue polypeptide: MDKRAMLGAIGLAFGLMAWPFGASAKEKSMVWNEQWKTPSFVSGSLLKGEDAPEELVYRYLDQEKNTFQLGGQARERLSLIGKQTDELGHTVMRFEQRYRGIPVYGAVLVAHVNDGELSSLSGTLIPNLDKRTLKTEAAISIQQAEMIAKQDVADAVTKERPAAEEGKPTRLVIYPDGETPRLAYEVNVRFLTPVPGNWIYMIDAADGKVLNKWNQMDEAKPGGGQPVAGTSTVGVGRGVLGDQKYINTTYSSYYGYYYLQDNTRGSGIFTYDGRNRTVLPGSLWADGDNQFFASYDAAAVDAHYYAGVVYDYYKNVHGRLSYDGSNAAIRSTVHYGRGYNNAFWNGSQMVYGDGDGQTFLPFSGGIDVVGHELTHAVTDYTAGLVYQNESGAINEAMSDIFGTLVEFYANRNPDWEIGEDIYTPGIAGDALRSMSDPAKYGDPDHYSKRYTGTQDNGGVHTNSGIINKAAYLLSQGGVHYGVSVTGIGRDKMGKIFYRALVYYLTPTSNFSQLRAACVQAAADLYGSTSQEVNSVKQAFNAVGVY.

The first 25 residues, 1–25, serve as a signal peptide directing secretion; the sequence is MDKRAMLGAIGLAFGLMAWPFGASA. Positions 26 to 228 are cleaved as a propeptide — activation peptide; it reads KEKSMVWNEQ…EAKPGGGQPV (203 aa). Residues aspartate 287, aspartate 289, glutamine 291, and aspartate 368 each coordinate Ca(2+). Histidine 372 contacts Zn(2+). Glutamate 373 is an active-site residue. 2 residues coordinate Zn(2+): histidine 376 and glutamate 396. Positions 413, 415, 417, 420, 423, 424, 427, and 430 each coordinate Ca(2+). Catalysis depends on histidine 461, which acts as the Proton donor.

It belongs to the peptidase M4 family. It depends on Ca(2+) as a cofactor. Zn(2+) is required as a cofactor.

It localises to the secreted. It catalyses the reaction Preferential cleavage: Xaa-|-Leu &gt; Xaa-|-Phe.. Functionally, extracellular zinc metalloprotease. The polypeptide is Thermolysin (npr) (Bacillus caldolyticus).